A 495-amino-acid polypeptide reads, in one-letter code: Serine/threonine-protein kinase STN8, chloroplastic (495 aa).

A chloroplast-targeting transit peptide spans 1–49; that stretch reads MASLLSPATPTATSAAFHSCSTAGFSTPTHISSQNSSLSLLSRRGCMMR. Positions 133–477 constitute a Protein kinase domain; that stretch reads FLVTEKLGEG…AAAALRHPYF (345 aa). ATP-binding positions include 139 to 147 and K186; that span reads LGEGSFGVV. Residue D308 is the Proton acceptor of the active site.

It belongs to the protein kinase superfamily. Ser/Thr protein kinase family.

It is found in the plastid. It localises to the chloroplast thylakoid. It catalyses the reaction L-seryl-[protein] + ATP = O-phospho-L-seryl-[protein] + ADP + H(+). It carries out the reaction L-threonyl-[protein] + ATP = O-phospho-L-threonyl-[protein] + ADP + H(+). Its function is as follows. Light-dependent serine/threonine protein kinase that specifically phosphorylates N-terminal threonine residues in psbA/D1, psbD/D2, psbC/CP43 and psbH, which are components of the core antenna complex of photosystem II. Phosphorylation of PSII core components facilitates the exchange of chlorophyll proteins between the grana and the stroma lamellae. Also involved in the phosphorylation of the calcium-sensing receptor (CaS). In Arabidopsis thaliana (Mouse-ear cress), this protein is Serine/threonine-protein kinase STN8, chloroplastic (STN8).